We begin with the raw amino-acid sequence, 419 residues long: UDP-N-acetylglucosamine 1-carboxyvinyltransferase (419 aa).

22–23 lines the phosphoenolpyruvate pocket; it reads KN. Residue arginine 93 coordinates UDP-N-acetyl-alpha-D-glucosamine. Residue cysteine 117 is the Proton donor of the active site. Cysteine 117 bears the 2-(S-cysteinyl)pyruvic acid O-phosphothioketal mark. The UDP-N-acetyl-alpha-D-glucosamine site is built by aspartate 307 and isoleucine 329.

It belongs to the EPSP synthase family. MurA subfamily.

Its subcellular location is the cytoplasm. The enzyme catalyses phosphoenolpyruvate + UDP-N-acetyl-alpha-D-glucosamine = UDP-N-acetyl-3-O-(1-carboxyvinyl)-alpha-D-glucosamine + phosphate. It participates in cell wall biogenesis; peptidoglycan biosynthesis. Its function is as follows. Cell wall formation. Adds enolpyruvyl to UDP-N-acetylglucosamine. The polypeptide is UDP-N-acetylglucosamine 1-carboxyvinyltransferase (Shewanella piezotolerans (strain WP3 / JCM 13877)).